Consider the following 323-residue polypeptide: tRNA U34 carboxymethyltransferase (323 aa).

Residues Lys91, Trp105, Lys110, Gly130, 152–154 (DPT), 181–182 (IE), Met196, Tyr200, and Arg315 each bind carboxy-S-adenosyl-L-methionine.

It belongs to the class I-like SAM-binding methyltransferase superfamily. CmoB family. Homotetramer.

It catalyses the reaction carboxy-S-adenosyl-L-methionine + 5-hydroxyuridine(34) in tRNA = 5-carboxymethoxyuridine(34) in tRNA + S-adenosyl-L-homocysteine + H(+). Catalyzes carboxymethyl transfer from carboxy-S-adenosyl-L-methionine (Cx-SAM) to 5-hydroxyuridine (ho5U) to form 5-carboxymethoxyuridine (cmo5U) at position 34 in tRNAs. The protein is tRNA U34 carboxymethyltransferase of Shigella flexneri.